The chain runs to 247 residues: Triosephosphate isomerase (247 aa).

9 to 11 provides a ligand contact to substrate; that stretch reads NWK. The active-site Electrophile is the histidine 93. Glutamate 163 serves as the catalytic Proton acceptor. Substrate-binding positions include glycine 169, serine 209, and 230 to 231; that span reads GG.

This sequence belongs to the triosephosphate isomerase family. Homodimer.

The protein localises to the cytoplasm. The catalysed reaction is D-glyceraldehyde 3-phosphate = dihydroxyacetone phosphate. The protein operates within carbohydrate biosynthesis; gluconeogenesis. Its pathway is carbohydrate degradation; glycolysis; D-glyceraldehyde 3-phosphate from glycerone phosphate: step 1/1. Its function is as follows. Involved in the gluconeogenesis. Catalyzes stereospecifically the conversion of dihydroxyacetone phosphate (DHAP) to D-glyceraldehyde-3-phosphate (G3P). The polypeptide is Triosephosphate isomerase (Dinoroseobacter shibae (strain DSM 16493 / NCIMB 14021 / DFL 12)).